The following is a 121-amino-acid chain: Mitochondrial intermembrane space cysteine motif-containing protein MIX14 (121 aa).

2 consecutive CHCH domains span residues 14 to 56 (VANC…VPSV) and 60 to 105 (MSEC…VKNK). 4 short sequence motifs (cx9C motif) span residues 17–27 (CPQEFLQYHKC), 38–48 (CKDGRMILSTC), 63–73 (CSEPMKKYDQC), and 87–97 (CLGFLQDLRKC). 4 cysteine pairs are disulfide-bonded: cysteine 17–cysteine 48, cysteine 27–cysteine 38, cysteine 63–cysteine 97, and cysteine 73–cysteine 87.

It is found in the mitochondrion intermembrane space. The protein is Mitochondrial intermembrane space cysteine motif-containing protein MIX14 (MIX14) of Saccharomyces cerevisiae (strain ATCC 204508 / S288c) (Baker's yeast).